Reading from the N-terminus, the 41-residue chain is MQVLSSLKTAKQRHRDCQIVRRKGKVYVICKSNPRFKARQR.

Belongs to the bacterial ribosomal protein bL36 family.

The polypeptide is Large ribosomal subunit protein bL36B (Neisseria meningitidis serogroup C (strain 053442)).